Reading from the N-terminus, the 1077-residue chain is Response regulator SSK1 (1077 aa).

A Response regulatory domain is found at 854 to 1000; it reads NVLIVEDNII…FLERKVMEWG (147 aa). Position 903 is a 4-aspartylphosphate (Asp903).

It belongs to the SSK1 family.

The protein localises to the cytoplasm. Functionally, two-domain response regulator protein in the two-component signal transduction system of the HOG1 pathway. Involved in multi-stress responses and is essential for conidiation, secondary metabolism, autophagy and endocyrosis. In addition, regulates mycelial growth, cell nucleus development, septum formation, and organelle development. Also regulates trap formation and thus plays a crucial role in pathogenicity. The chain is Response regulator SSK1 from Arthrobotrys oligospora (strain ATCC 24927 / CBS 115.81 / DSM 1491) (Nematode-trapping fungus).